The chain runs to 479 residues: M-phase inducer phosphatase (479 aa).

The disordered stretch occupies residues 182–218 (MTESNTNSTTTPPPKTPETARDCFKRPEPPASANCSP). Over residues 199-209 (ETARDCFKRPE) the composition is skewed to basic and acidic residues. The region spanning 316–432 (KVASYRIIDC…FFESHVELCE (117 aa)) is the Rhodanese domain. Cys379 is a catalytic residue. A Phosphoserine modification is found at Ser455.

This sequence belongs to the MPI phosphatase family.

It carries out the reaction O-phospho-L-tyrosyl-[protein] + H2O = L-tyrosyl-[protein] + phosphate. In terms of biological role, this protein functions as a dosage-dependent inducer in mitotic control. It is a tyrosine protein phosphatase required for progression of the cell cycle. It may directly dephosphorylate Cdk1 and activate the Cdk1 activity. This chain is M-phase inducer phosphatase (stg), found in Drosophila melanogaster (Fruit fly).